A 138-amino-acid polypeptide reads, in one-letter code: Basic phospholipase A2 homolog TM-N49 (138 aa).

The N-terminal stretch at 1-16 is a signal peptide; sequence MRTLWIMAVLLLGVEG. 7 disulfide bridges follow: C42/C131, C44/C60, C59/C111, C65/C138, C66/C104, C73/C97, and C91/C102.

The protein belongs to the phospholipase A2 family. Group II subfamily. N49 sub-subfamily. In terms of assembly, homodimer; non-covalently linked. In terms of tissue distribution, expressed by the venom gland.

It is found in the secreted. Its function is as follows. Snake venom phospholipase A2 (PLA2) that exhibits potent myotoxic activity causing inflammatory cell infiltration, severe myoedema, myonecrosis and myolysis in the gastrocnemius muscles of BALB/c mice. The polypeptide is Basic phospholipase A2 homolog TM-N49 (Protobothrops mucrosquamatus (Taiwan habu)).